The sequence spans 257 residues: Dihydroorotate dehydrogenase B (NAD(+)), electron transfer subunit (257 aa).

Residues 2 to 102 (IGRERMTVAS…LGPLGNGFPL (101 aa)) enclose the FAD-binding FR-type domain. FAD is bound by residues 53–56 (RPLS), 70–72 (IYR), and 77–78 (GT). Residues Cys221, Cys226, Cys229, and Cys244 each coordinate [2Fe-2S] cluster.

The protein belongs to the PyrK family. As to quaternary structure, heterotetramer of 2 PyrK and 2 PyrD type B subunits. It depends on [2Fe-2S] cluster as a cofactor. The cofactor is FAD.

It participates in pyrimidine metabolism; UMP biosynthesis via de novo pathway; orotate from (S)-dihydroorotate (NAD(+) route): step 1/1. Functionally, responsible for channeling the electrons from the oxidation of dihydroorotate from the FMN redox center in the PyrD type B subunit to the ultimate electron acceptor NAD(+). The protein is Dihydroorotate dehydrogenase B (NAD(+)), electron transfer subunit of Geobacillus kaustophilus (strain HTA426).